The chain runs to 206 residues: Geminin (206 aa).

Positions 1–18 (MNLSMKQKQEGAQENVKN) are enriched in polar residues. Positions 1 to 42 (MNLSMKQKQEGAQENVKNSPVPRRTLKMIQPSADGSLVGREN) are disordered. Lysine 27 is modified (N6-acetyllysine). A phosphoserine mark is found at serine 36, serine 63, and serine 64. The interval 79-158 (TQEAFDLISK…AEVIERLSNE (80 aa)) is necessary and sufficient for interaction with IDAS and CDT1. Residues 91-141 (PSSQYWKEVAEQRRKALYEALKENEKLHKEIEQKDSEIARLRKENKDLAEV) are a coiled coil. The segment at 157 to 206 (NEPLDNFESPDSQEFDSEEEAVEYSELEDSGAGTCAEETVSSSTDARPCT) is disordered. Positions 167–185 (DSQEFDSEEEAVEYSELED) are enriched in acidic residues. A homeodomain binding region spans residues 167 to 187 (DSQEFDSEEEAVEYSELEDSG). Serine 181 is subject to Phosphoserine; by CK2. The segment covering 195–206 (TVSSSTDARPCT) has biased composition (polar residues).

Belongs to the geminin family. Homotetramer. Interacts with CDT1; this inhibits binding of the MCM complex to origins of replication. The complex with CDT1 exists in two forms, a 'permissive' heterotrimer and an 'inhibitory' heterohexamer. Interacts (via coiled-coil domain) with IDAS (via coiled-coil domain); this targets GMNN to the nucleus. The heterodimer formed by GMNN and MCIDAS has much lower affinity for CDT1 than the GMNN homodimer. Interacts with a subset of Hox proteins, affinity increasing from anterior to posterior types, the strongest interaction being with HOXB1, HOXC9 and HOXD10. Interacts with LRWD1 from G1/S to mitosis. Post-translationally, phosphorylated during mitosis. Phosphorylation at Ser-181 by CK2 results in enhanced binding to Hox proteins and more potent inhibitory effect on Hox transcriptional activity.

It is found in the cytoplasm. Its subcellular location is the nucleus. Inhibits DNA replication by preventing the incorporation of MCM complex into pre-replication complex (pre-RC). It is degraded during the mitotic phase of the cell cycle. Its destruction at the metaphase-anaphase transition permits replication in the succeeding cell cycle. Inhibits histone acetyltransferase activity of KAT7/HBO1 in a CDT1-dependent manner, inhibiting histone H4 acetylation and DNA replication licensing. Inhibits the transcriptional activity of a subset of Hox proteins, enrolling them in cell proliferative control. The protein is Geminin (Gmnn) of Mus musculus (Mouse).